A 294-amino-acid polypeptide reads, in one-letter code: Sarcotoxin-2A (294 aa).

A signal peptide spans 1–22; that stretch reads MKSFVFFAACMAIIALSSLVQA. The propeptide at 23-24 is removed by a dipeptidylpeptidase; sequence YP. At Q25 the chain carries Pyrrolidone carboxylic acid. R293 is modified (arginine amide).

The protein belongs to the attacin/sarcotoxin-2 family. As to expression, synthesized by the fat body and is eventually secreted into the hemolymph.

It is found in the secreted. Its function is as follows. Sarcotoxin II is an antibacterial protein which plays a role in the inflammatory response of this insect. The main effect of sarcotoxin II on E.coli may be the inhibition of cell wall synthesis, including septum formation. This Sarcophaga peregrina (Flesh fly) protein is Sarcotoxin-2A.